We begin with the raw amino-acid sequence, 148 residues long: CASP-like protein 1 (148 aa).

Transmembrane regions (helical) follow at residues 31-51 (FIYF…TSLL), 74-94 (VLLL…GYIG), and 121-141 (IAAG…SFFT).

Belongs to the Casparian strip membrane proteins (CASP) family. Homodimer and heterodimers.

It is found in the cell membrane. This Panax ginseng (Korean ginseng) protein is CASP-like protein 1.